The sequence spans 122 residues: Class I hydrophobin 2 (122 aa).

Positions 1–22 are cleaved as a signal peptide; the sequence is MFARVSTLFAMFFLGLALMVSA. 4 disulfide bridges follow: Cys40–Cys101, Cys47–Cys95, Cys48–Cys81, and Cys102–Cys115.

Belongs to the fungal hydrophobin family. In terms of assembly, self-assembles to form functional amyloid fibrils called rodlets. Self-assembly into fibrillar rodlets occurs spontaneously at hydrophobic:hydrophilic interfaces and the rodlets further associate laterally to form amphipathic monolayers.

It is found in the secreted. Its subcellular location is the cell wall. In terms of biological role, aerial growth, conidiation, and dispersal of filamentous fungi in the environment rely upon a capability of their secreting small amphipathic proteins called hydrophobins (HPBs) with low sequence identity. Class I can self-assemble into an outermost layer of rodlet bundles on aerial cell surfaces, conferring cellular hydrophobicity that supports fungal growth, development and dispersal; whereas Class II form highly ordered films at water-air interfaces through intermolecular interactions but contribute nothing to the rodlet structure. Hah2 is a class I hydrophobin that is involved in aerial growth of mycelia, but does not play a role in pathogenesis. The sequence is that of Class I hydrophobin 2 from Heterobasidion annosum (Root rot fungus).